The sequence spans 94 residues: uncharacterized protein (94 aa).

Positions 1–22 (MIMKNCLLLGALLMGFTGVAMA) are cleaved as a signal peptide.

This is an uncharacterized protein from Escherichia coli (strain K12).